A 168-amino-acid polypeptide reads, in one-letter code: Plastocyanin, chloroplastic (168 aa).

The N-terminal 70 residues, 1 to 70 (MASVAAAAVS…SSLLLVASAN (70 aa)), are a transit peptide targeting the chloroplast. The region spanning 71–168 (AATVKMGGDD…AGMKGVVTVS (98 aa)) is the Plastocyanin-like domain. Cu cation contacts are provided by His108, Cys153, His156, and Met161.

This sequence belongs to the plastocyanin family. It depends on Cu(2+) as a cofactor.

The protein resides in the plastid. It localises to the chloroplast thylakoid membrane. In terms of biological role, participates in electron transfer between P700 and the cytochrome b6-f complex in photosystem I. The chain is Plastocyanin, chloroplastic (PETE) from Physcomitrium patens (Spreading-leaved earth moss).